A 59-amino-acid polypeptide reads, in one-letter code: Large ribosomal subunit protein bL32 (59 aa).

Over residues 1-15 (MAVPKKKTSKSKRDM) the composition is skewed to basic residues. Residues 1–26 (MAVPKKKTSKSKRDMRRATWNRKAAA) form a disordered region.

Belongs to the bacterial ribosomal protein bL32 family.

This chain is Large ribosomal subunit protein bL32, found in Cyanothece sp. (strain PCC 7425 / ATCC 29141).